An 82-amino-acid chain; its full sequence is Escargot/snail protein homolog (82 aa).

4 C2H2-type zinc fingers span residues 1-5 (HLQFH), 18-40 (FSCK…IRTH), 44-66 (CKCD…IRTH), and 72-82 (FSCQHCHRAFA).

This sequence belongs to the snail C2H2-type zinc-finger protein family.

The protein localises to the nucleus. This Bradysia coprophila (Dark-winged fungus gnat) protein is Escargot/snail protein homolog.